The primary structure comprises 140 residues: Putative pre-16S rRNA nuclease (140 aa).

Belongs to the YqgF nuclease family.

It localises to the cytoplasm. In terms of biological role, could be a nuclease involved in processing of the 5'-end of pre-16S rRNA. This chain is Putative pre-16S rRNA nuclease, found in Endomicrobium trichonymphae.